A 371-amino-acid polypeptide reads, in one-letter code: tRNA-specific 2-thiouridylase MnmA (371 aa).

ATP is bound by residues 13–20 (GMSGGVDS) and Met-39. Residues 99-101 (NPD) are interaction with target base in tRNA. Residue Cys-104 is the Nucleophile of the active site. Cysteines 104 and 200 form a disulfide. ATP is bound at residue Gly-128. The interval 150-152 (KDQ) is interaction with tRNA. Cys-200 (cysteine persulfide intermediate) is an active-site residue. The interaction with tRNA stretch occupies residues 308–309 (RY).

Belongs to the MnmA/TRMU family.

It localises to the cytoplasm. It catalyses the reaction S-sulfanyl-L-cysteinyl-[protein] + uridine(34) in tRNA + AH2 + ATP = 2-thiouridine(34) in tRNA + L-cysteinyl-[protein] + A + AMP + diphosphate + H(+). In terms of biological role, catalyzes the 2-thiolation of uridine at the wobble position (U34) of tRNA, leading to the formation of s(2)U34. This Bacillus anthracis protein is tRNA-specific 2-thiouridylase MnmA.